A 136-amino-acid chain; its full sequence is Cytochrome b5 (136 aa).

A Cytochrome b5 heme-binding domain is found at 5 to 81 (TKVFTLAEVS…LDEYYVGDID (77 aa)). Residues H40 and H64 each coordinate heme. A helical membrane pass occupies residues 107-127 (FVVKLLQFLVPLIILGVAFGI).

Belongs to the cytochrome b5 family. In terms of tissue distribution, is highly expressed in developing seeds, moderately expressed in flowers, and is expressed at low levels in the leaf.

The protein localises to the endoplasmic reticulum membrane. The protein resides in the microsome membrane. In terms of biological role, cytochrome b5 is a membrane bound hemoprotein which function as an electron carrier for several membrane bound oxygenases. May play a key role in the modification by desaturation of fatty acids in the endoplasmic reticulum, which in the developing seed is utilized for membrane synthesis and in the developmentally regulated production of large amounts of storage lipids. Is involved in the reduction of cytochrome P-450 and may therefore be involved in flavonoid biosynthesis in the petals. This chain is Cytochrome b5, found in Nicotiana tabacum (Common tobacco).